Here is a 333-residue protein sequence, read N- to C-terminus: Adenosine deaminase (333 aa).

Positions 12 and 14 each coordinate Zn(2+). 3 residues coordinate substrate: H14, D16, and G170. A Zn(2+)-binding site is contributed by H197. E200 (proton donor) is an active-site residue. D278 is a Zn(2+) binding site. D279 lines the substrate pocket.

This sequence belongs to the metallo-dependent hydrolases superfamily. Adenosine and AMP deaminases family. Adenosine deaminase subfamily. Zn(2+) is required as a cofactor.

It catalyses the reaction adenosine + H2O + H(+) = inosine + NH4(+). The enzyme catalyses 2'-deoxyadenosine + H2O + H(+) = 2'-deoxyinosine + NH4(+). Functionally, catalyzes the hydrolytic deamination of adenosine and 2-deoxyadenosine. In Escherichia coli (strain SMS-3-5 / SECEC), this protein is Adenosine deaminase.